The primary structure comprises 131 residues: Profilin-7 (131 aa).

A disulfide bridge connects residues Cys-13 and Cys-115. The Involved in PIP2 interaction signature appears at Ala-81–Thr-97. Thr-111 is modified (phosphothreonine).

This sequence belongs to the profilin family. As to quaternary structure, occurs in many kinds of cells as a complex with monomeric actin in a 1:1 ratio. In terms of processing, phosphorylated by MAP kinases.

The protein resides in the cytoplasm. The protein localises to the cytoskeleton. In terms of biological role, binds to actin and affects the structure of the cytoskeleton. At high concentrations, profilin prevents the polymerization of actin, whereas it enhances it at low concentrations. This chain is Profilin-7, found in Zea mays (Maize).